The sequence spans 419 residues: Vascular endothelial growth factor C (419 aa).

Residues 1-31 form the signal peptide; it reads MHLLGFFSVACSLLAAALLPGPREAPAAAAA. The propeptide at 32–111 is or 102; it reads FESGLDLSDA…RTEETIKFAA (80 aa). Intrachain disulfides connect Cys-131–Cys-173, Cys-162–Cys-209, and Cys-166–Cys-211. N-linked (GlcNAc...) asparagine glycosylation is found at Asn-175, Asn-205, and Asn-240. Positions 228-419 are excised as a propeptide; sequence SLPATLPQCQ…PSYWKRPQMS (192 aa). Repeat copies occupy residues 280–295, 304–319, 328–343, and 347–362. The tract at residues 280-362 is 4 X 16 AA repeats of C-X(10)-C-X-C-X(1,3)-C; the sequence is CGPNKELDEE…LNPGKCACEC (83 aa).

It belongs to the PDGF/VEGF growth factor family. As to quaternary structure, homodimer; non-covalent and antiparallel. Interacts with FLT4/VEGFR3; the interaction is required for FLT4/VEGFR3 homodimarization and activation. Undergoes a complex proteolytic maturation which generates a variety of processed secreted forms with increased activity toward VEGFR-3, but only the fully processed form could activate VEGFR-2. VEGF-C first form an antiparallel homodimer linked by disulfide bonds. Before secretion, a cleavage occurs between Arg-227 and Ser-228 producing a heterotetramer. The next extracellular step of the processing removes the N-terminal propeptide. Finally the mature VEGF-C is composed mostly of two VEGF homology domains (VHDs) bound by non-covalent interactions. In terms of tissue distribution, expressed in the spleen. Expressed in the lymph node, thymus, appendix and bone marrow. Expressed in the heart, placenta, skeletal muscle, ovary and small intestine. Expressed in the prostate, testis and colon.

Its subcellular location is the secreted. In terms of biological role, growth factor active in angiogenesis, and endothelial cell growth, stimulating their proliferation and migration and also has effects on the permeability of blood vessels. May function in angiogenesis of the venous and lymphatic vascular systems during embryogenesis, and also in the maintenance of differentiated lymphatic endothelium in adults. Binds and activates KDR/VEGFR2 and FLT4/VEGFR3 receptors. The protein is Vascular endothelial growth factor C (VEGFC) of Homo sapiens (Human).